Here is a 336-residue protein sequence, read N- to C-terminus: Ketol-acid reductoisomerase (NADP(+)) (336 aa).

A KARI N-terminal Rossmann domain is found at 1-181 (MKVYYDQDAD…GGGRSGIIET (181 aa)). NADP(+) is bound by residues 24–27 (YGSQ), Arg-47, Ser-50, and Ser-52. The active site involves His-107. Gly-133 is a binding site for NADP(+). Positions 182–327 (SFREETETDL…ERLRGMMPWI (146 aa)) constitute a KARI C-terminal knotted domain. Residues Asp-190, Glu-194, Glu-226, and Glu-230 each coordinate Mg(2+). Ser-251 serves as a coordination point for substrate.

The protein belongs to the ketol-acid reductoisomerase family. Mg(2+) is required as a cofactor.

It carries out the reaction (2R)-2,3-dihydroxy-3-methylbutanoate + NADP(+) = (2S)-2-acetolactate + NADPH + H(+). The catalysed reaction is (2R,3R)-2,3-dihydroxy-3-methylpentanoate + NADP(+) = (S)-2-ethyl-2-hydroxy-3-oxobutanoate + NADPH + H(+). Its pathway is amino-acid biosynthesis; L-isoleucine biosynthesis; L-isoleucine from 2-oxobutanoate: step 2/4. It participates in amino-acid biosynthesis; L-valine biosynthesis; L-valine from pyruvate: step 2/4. In terms of biological role, involved in the biosynthesis of branched-chain amino acids (BCAA). Catalyzes an alkyl-migration followed by a ketol-acid reduction of (S)-2-acetolactate (S2AL) to yield (R)-2,3-dihydroxy-isovalerate. In the isomerase reaction, S2AL is rearranged via a Mg-dependent methyl migration to produce 3-hydroxy-3-methyl-2-ketobutyrate (HMKB). In the reductase reaction, this 2-ketoacid undergoes a metal-dependent reduction by NADPH to yield (R)-2,3-dihydroxy-isovalerate. This Halorhodospira halophila (strain DSM 244 / SL1) (Ectothiorhodospira halophila (strain DSM 244 / SL1)) protein is Ketol-acid reductoisomerase (NADP(+)).